We begin with the raw amino-acid sequence, 636 residues long: 1-deoxy-D-xylulose-5-phosphate synthase (636 aa).

Residues histidine 84 and 125–127 each bind thiamine diphosphate; that span reads GHS. Aspartate 156 is a Mg(2+) binding site. Thiamine diphosphate contacts are provided by residues 157 to 158, asparagine 185, phenylalanine 292, and glutamate 375; that span reads GA. Asparagine 185 is a binding site for Mg(2+).

The protein belongs to the transketolase family. DXPS subfamily. Homodimer. Mg(2+) is required as a cofactor. It depends on thiamine diphosphate as a cofactor.

The catalysed reaction is D-glyceraldehyde 3-phosphate + pyruvate + H(+) = 1-deoxy-D-xylulose 5-phosphate + CO2. It functions in the pathway metabolic intermediate biosynthesis; 1-deoxy-D-xylulose 5-phosphate biosynthesis; 1-deoxy-D-xylulose 5-phosphate from D-glyceraldehyde 3-phosphate and pyruvate: step 1/1. Catalyzes the acyloin condensation reaction between C atoms 2 and 3 of pyruvate and glyceraldehyde 3-phosphate to yield 1-deoxy-D-xylulose-5-phosphate (DXP). This is 1-deoxy-D-xylulose-5-phosphate synthase from Cellvibrio japonicus (strain Ueda107) (Pseudomonas fluorescens subsp. cellulosa).